A 195-amino-acid polypeptide reads, in one-letter code: Recombination protein RecR (195 aa).

A C4-type zinc finger spans residues 53 to 68; that stretch reads CTICHNLDTISPCSIC. Residues 76-171 enclose the Toprim domain; the sequence is SIICVVEELG…KVTRLACGIP (96 aa).

Belongs to the RecR family.

In terms of biological role, may play a role in DNA repair. It seems to be involved in an RecBC-independent recombinational process of DNA repair. It may act with RecF and RecO. The chain is Recombination protein RecR from Anaplasma marginale (strain St. Maries).